A 109-amino-acid chain; its full sequence is Histidine-rich carboxyl terminus protein 1 (109 aa).

Residues 13–33 form a helical membrane-spanning segment; the sequence is WITGTALAFLMLLWLMALCLF. The segment at 77-109 is disordered; sequence TSVGVHHHHHHSPHRLHHHKHHHRHHHAHGARR. The span at 81–109 shows a compositional bias: basic residues; the sequence is VHHHHHHSPHRLHHHKHHHRHHHAHGARR.

It is found in the membrane. This chain is Histidine-rich carboxyl terminus protein 1 (Hrct1), found in Mus musculus (Mouse).